We begin with the raw amino-acid sequence, 197 residues long: DNA helicase/primase complex protein (197 aa).

It belongs to the herpesviridae UL52 family.

Functionally, involved in DNA replication. This Equus caballus (Horse) protein is DNA helicase/primase complex protein (7).